Reading from the N-terminus, the 776-residue chain is MATGDLQGKYQKLAQEYSKLRAQNQVLKRAVVDEQANGTALKEQLKMKDQSLRKQQQEMDSLTFRNQQLAKRVELLQDELSLMDVKGKKTKKNMDTSQLSQEQKSVFDEDLQKKIEENERLHIQFFEASETHRQMESELTSRLQELETNTAQHQAVVDGLTQKYMDTIEKLQGDKAKLEVKCQALEREAKDCRLRTEDCQNQLKTLHTDLSSRLDDSLVIINEKLPFNDTRTSQLNALNVPVHNKRYQLKARELANQGLSFVRDLVTALLNFHTYTEQRVQIFPIDSAIDVVSPLNKKFSEYLHENASYVRPLEDGMLQLFESITEDTVTVLETAVKLKIFSENFSSYVCFLQKILPYQLKSLEEESEFSSGTSALRSRNQELHKDMQKITAVFDKLKTYITLLALPSTKPEGLLRTNYGTILTQISEALHRLHDISQELSKHYNNKAALEQELPAATDKLKTTNDCVLSSLAALTNVTSKIATFFGNNLDYFISSLSYGPKGGRGFTNPLSAETMLVYKKKAAQYMNNLRKPCPASVPYEEALVNRRVLLSSTESREGLAQQVQQSLEKIGKLEQEKEHWMLEAQLSKIKLEKETLRIAALIKGTEKGQLPEVPHDNALLLDAGEHGKGNSTETKSTSLIGMLTVTIEDLQAPDHDSREELIKNHYMTRIAELTTHLQQADSKAVHLYAECRALAKRLTLSDKSNRSLTEETKYSVQSISKLQDELITTKRSYEDQLSMMSDHLCVMNETLSKQREEIDTLKMANKGNSKKNKMR.

3 coiled-coil regions span residues 4-206 (GDLQ…LKTL), 432-466 (RLHD…TTND), and 555-597 (ESRE…KETL).

In terms of assembly, component of the FERRY complex.

The protein resides in the early endosome. Component of the FERRY complex (Five-subunit Endosomal Rab5 and RNA/ribosome intermediary). The FERRY complex directly interacts with mRNAs and RAB5A, and functions as a RAB5A effector involved in the localization and the distribution of specific mRNAs most likely by mediating their endosomal transport. The complex recruits mRNAs and ribosomes to early endosomes through direct mRNA-interaction. Putative regulator of protein phosphatase 1 (PP1) activity. May play a role in the endosomal sorting process or in endosome maturation pathway. The protein is Protein phosphatase 1 regulatory subunit 21 (ppp1r21) of Xenopus laevis (African clawed frog).